Here is a 128-residue protein sequence, read N- to C-terminus: MIPRSTRQQAGREAEAFALQFLQQQGLRLIEQNWLCKRGELDLVMLDGDTVVFVEVRYRRHCGWGGAVESVDFRKQGKLVTAAQLFLQQVSCWADYPCRFDVIAIEGSPGSFDGSTVPLNWIKSAFDS.

The protein belongs to the UPF0102 family.

The protein is UPF0102 protein PSPTO_4420 of Pseudomonas syringae pv. tomato (strain ATCC BAA-871 / DC3000).